The following is a 789-amino-acid chain: Molybdenum cofactor sulfurase (789 aa).

Lysine 251 bears the N6-(pyridoxal phosphate)lysine mark. Cysteine 422 is an active-site residue. The MOSC domain maps to 628–789 (GDQVAQWLDQ…LICGETLEVD (162 aa)). A Phosphoserine modification is found at serine 741.

It belongs to the class-V pyridoxal-phosphate-dependent aminotransferase family. MOCOS subfamily. It depends on pyridoxal 5'-phosphate as a cofactor.

It catalyses the reaction Mo-molybdopterin + L-cysteine + AH2 = thio-Mo-molybdopterin + L-alanine + A + H2O. It functions in the pathway cofactor biosynthesis; molybdopterin biosynthesis. In terms of biological role, sulfurates the molybdenum cofactor. Sulfation of molybdenum is essential for xanthine dehydrogenase (XDH) and aldehyde oxidase (ADO) enzymes in which molybdenum cofactor is liganded by 1 oxygen and 1 sulfur atom in active form. This Drosophila willistoni (Fruit fly) protein is Molybdenum cofactor sulfurase.